Here is a 277-residue protein sequence, read N- to C-terminus: MIOREX complex component 2 (277 aa).

Belongs to the NAD(P)-dependent epimerase/dehydratase family. As to quaternary structure, associates with the mitochondrial ribosome. Component of a multi-subunit COQ enzyme complex.

The protein localises to the mitochondrion. It functions in the pathway cofactor biosynthesis; ubiquinone biosynthesis. Functionally, component of MIOREX complexes, large expressome-like assemblies of ribosomes with factors involved in all the steps of post-transcriptional gene expression. Component of a multi-subunit COQ enzyme complex required for coenzyme Q biosynthesis. The sequence is that of MIOREX complex component 2 from Saccharomyces cerevisiae (strain ATCC 204508 / S288c) (Baker's yeast).